A 569-amino-acid chain; its full sequence is Nucleoprotein (569 aa).

The segment at methionine 54–isoleucine 241 is binding site for the cap structure m7GTP. 2 residues coordinate Mn(2+): aspartate 389 and glutamate 391. The Zn(2+) site is built by glutamate 399, cysteine 506, histidine 509, and cysteine 529. Aspartate 533 is a Mn(2+) binding site.

Belongs to the arenaviridae nucleocapsid protein family. As to quaternary structure, homomultimerizes to form the nucleocapsid. Binds to viral genomic RNA. Interacts with glycoprotein G2. Interacts with protein Z; this interaction probably directs the encapsidated genome to budding sites. Interacts with protein L; this interaction does not interfere with Z-L interaction. Interacts with host IKBKE (via Protein kinase domain); the interaction inhibits IKBKE kinase activity.

The protein resides in the virion. Its subcellular location is the host cytoplasm. In terms of biological role, encapsidates the genome, protecting it from nucleases. The encapsidated genomic RNA is termed the nucleocapsid (NC). Serves as template for viral transcription and replication. The increased presence of protein N in host cell does not seem to trigger the switch from transcription to replication as observed in other negative strain RNA viruses. Through the interaction with host IKBKE, strongly inhibits the phosphorylation and nuclear translocation of host IRF3, a protein involved in interferon activation pathway, leading to the inhibition of interferon-beta and IRF3-dependent promoters activation. Also encodes a functional 3'-5' exoribonuclease that degrades preferentially dsRNA substrates and thereby participates in the suppression of interferon induction. The sequence is that of Nucleoprotein from Lassa virus (strain Mouse/Sierra Leone/Josiah/1976) (LASV).